The following is a 94-amino-acid chain: Lipolysis-activating peptide 1-beta chain (94 aa).

Residues 1–19 form the signal peptide; sequence MKILAVVLISVIVLNTANG. Residues 20–87 form the LCN-type CS-alpha/beta domain; sequence ENYYPQKYTN…FFNALESQCP (68 aa). Intrachain disulfides connect cysteine 34–cysteine 56, cysteine 42–cysteine 66, and cysteine 46–cysteine 68.

It belongs to the long (3 C-C) scorpion toxin superfamily. In terms of assembly, homodimer; disulfide-linked or monomer (edited version) or heterodimer of an alpha chain (AC D9U299 or AC D9U2A4) and this beta chain (non-edited version). As to expression, expressed by the venom gland.

Its subcellular location is the secreted. In terms of biological role, the homodimer inhibits HMG-CoA reductase (HMGCR) (32% of inhibition produced by 0.6 uM), a glycoprotein involved in the control of cholesterol biosynthesis. The inhibitory effects of bumarsin are seen at much lower concentrations (0.6 uM) than that for statins such as atorvastatin (5 mM) and simvastatin (10 uM). In addition to inhibition of HMG-CoA reductase, this protein lowers cholesterol levels by inducing steroid hormone synthesis via StAR, and by increasing reverse cholesterol transport mediated by the induction of ABCA1 and APOA1. The heterodimer non-edited LVP1 induces lipolysis in rat adipocytes. Induction of lipolysis by LVP1 appears to be mediated through the beta-2 adrenergic receptor pathway (ADRB2). Its function is as follows. The monomer edited version, similar to alpha-toxins, may modulate voltage-gated sodium channels (Nav) and may block voltage-gated potassium channels (Kv). The polypeptide is Lipolysis-activating peptide 1-beta chain (Lychas mucronatus (Chinese swimming scorpion)).